The following is a 239-amino-acid chain: Sugar fermentation stimulation protein homolog (239 aa).

It belongs to the SfsA family.

This chain is Sugar fermentation stimulation protein homolog, found in Methanobrevibacter smithii (strain ATCC 35061 / DSM 861 / OCM 144 / PS).